A 321-amino-acid chain; its full sequence is Olfactory receptor 52N2 (321 aa).

The Extracellular segment spans residues 1–27 (MSGDNSSSLTPGFFILNGVPGLEATHI). N-linked (GlcNAc...) asparagine glycosylation occurs at Asn5. The helical transmembrane segment at 28 to 48 (WISLPFCFMYIIAVVGNCGLI) threads the bilayer. Residues 49-56 (CLISHEEA) are Cytoplasmic-facing. Residues 57 to 77 (LHRPMYYFLALLSFTDVTLCT) traverse the membrane as a helical segment. The Extracellular segment spans residues 78-101 (TMVPNMLCIFWFNLKEIDFNACLA). Residues Cys99 and Cys191 are joined by a disulfide bond. The helical transmembrane segment at 102–122 (QMFFVHMLTGMESGVLMLMAL) threads the bilayer. The Cytoplasmic portion of the chain corresponds to 123–141 (DRYVAICYPLRYATILTNP). The helical transmembrane segment at 142–162 (VIAKAGLATFLRNVMLIIPFT) threads the bilayer. Over 163 to 198 (LLTKRLPYCRGNFIPHTYCDHMSVAKVSCGNFKVNA) the chain is Extracellular. A helical transmembrane segment spans residues 199–219 (IYGLMVALLIGVFDICCISVS). Residues 220 to 239 (YTMILQAVMSLSSADARHKA) lie on the Cytoplasmic side of the membrane. Residues 240–260 (FSTCTSHMCSIVITYVAAFFT) form a helical membrane-spanning segment. Residues 261–276 (FFTHRFVGHNIPNHIH) lie on the Extracellular side of the membrane. Residues 277–297 (IIVANLYLLLPPTMNPIVYGV) traverse the membrane as a helical segment. Residues 298–321 (KTKQIQEGVIKFLLGDKVSFTYDK) are Cytoplasmic-facing.

It belongs to the G-protein coupled receptor 1 family.

Its subcellular location is the cell membrane. Its function is as follows. Odorant receptor. This is Olfactory receptor 52N2 (OR52N2) from Homo sapiens (Human).